Here is a 130-residue protein sequence, read N- to C-terminus: Small ribosomal subunit protein uS9 (130 aa).

The segment at 109–130 (RMKERKKYGLKAARRAPQFSKR) is disordered. Over residues 111 to 130 (KERKKYGLKAARRAPQFSKR) the composition is skewed to basic residues.

Belongs to the universal ribosomal protein uS9 family.

The sequence is that of Small ribosomal subunit protein uS9 from Lachnoclostridium phytofermentans (strain ATCC 700394 / DSM 18823 / ISDg) (Clostridium phytofermentans).